The primary structure comprises 244 residues: 1-(5-phosphoribosyl)-5-[(5-phosphoribosylamino)methylideneamino] imidazole-4-carboxamide isomerase (244 aa).

Aspartate 10 functions as the Proton acceptor in the catalytic mechanism. Aspartate 132 functions as the Proton donor in the catalytic mechanism.

The protein belongs to the HisA/HisF family.

The protein resides in the cytoplasm. The catalysed reaction is 1-(5-phospho-beta-D-ribosyl)-5-[(5-phospho-beta-D-ribosylamino)methylideneamino]imidazole-4-carboxamide = 5-[(5-phospho-1-deoxy-D-ribulos-1-ylimino)methylamino]-1-(5-phospho-beta-D-ribosyl)imidazole-4-carboxamide. Its pathway is amino-acid biosynthesis; L-histidine biosynthesis; L-histidine from 5-phospho-alpha-D-ribose 1-diphosphate: step 4/9. This is 1-(5-phosphoribosyl)-5-[(5-phosphoribosylamino)methylideneamino] imidazole-4-carboxamide isomerase from Xanthomonas axonopodis pv. citri (strain 306).